The chain runs to 312 residues: MKPQLVNLLLLCCCCLGRHGVAGTWSWSHQREAAALRESLHRHRYLNSFPHENSTAFYGVNQFSYLFPEEFKALYLGSKYAWAPRYPAEGQRPIPNVSLPLRFDWRDKHVVNPVRNQEMCGGCWAFSVVSAIESARAIQGKSLDYLSVQQVIDCSFNNSGCLGGSPLCALRWLNETQLKLVADSQYPFKAVNGQCRHFPQSQAGVSVKDFSAYNFRGQEDEMARALLSFGPLVVIVDAMSWQDYLGGIIQHHCSSGEANHAVLITGFDRTGNTPYWMVRNSWGSSWGVEGYAHVKMGGNVCGIADSVAAVFV.

The signal sequence occupies residues 1-23 (MKPQLVNLLLLCCCCLGRHGVAG). Positions 24-98 (TWSWSHQREA…EGQRPIPNVS (75 aa)) are cleaved as a propeptide — activation peptide. N-linked (GlcNAc...) asparagine glycans are attached at residues Asn-53 and Asn-96. Cystine bridges form between Cys-120/Cys-161, Cys-154/Cys-195, and Cys-253/Cys-301. Cys-123 is an active-site residue. Residues His-260 and Asn-280 contribute to the active site.

It belongs to the peptidase C1 family.

It localises to the lysosome. The catalysed reaction is The recombinant human enzyme hydrolyzes synthetic endopeptidase substrates including Z-Phe-Arg-NHMec and Z-Arg-Arg-NHMec.. Functionally, proteolytic enzyme possibly involved in normal cellular protein degradation and turnover. The protein is Cathepsin O (Ctso) of Mus musculus (Mouse).